The following is a 416-amino-acid chain: Probable F-box protein At5g47300 (416 aa).

Residues Thr-40–His-86 enclose the F-box domain.

The polypeptide is Probable F-box protein At5g47300 (Arabidopsis thaliana (Mouse-ear cress)).